An 85-amino-acid polypeptide reads, in one-letter code: Small ribosomal subunit protein uS17 (85 aa).

The protein belongs to the universal ribosomal protein uS17 family. In terms of assembly, part of the 30S ribosomal subunit.

Functionally, one of the primary rRNA binding proteins, it binds specifically to the 5'-end of 16S ribosomal RNA. This chain is Small ribosomal subunit protein uS17, found in Actinobacillus succinogenes (strain ATCC 55618 / DSM 22257 / CCUG 43843 / 130Z).